Consider the following 307-residue polypeptide: Putative S-adenosyl-L-methionine-dependent methyltransferase MUL_4430 (307 aa).

S-adenosyl-L-methionine is bound by residues Asp-128 and 157–158 (DL).

The protein belongs to the UPF0677 family.

Exhibits S-adenosyl-L-methionine-dependent methyltransferase activity. The protein is Putative S-adenosyl-L-methionine-dependent methyltransferase MUL_4430 of Mycobacterium ulcerans (strain Agy99).